The chain runs to 259 residues: MTIINLKNINLTRNKKEILKDITWKVNPGENWVILGLNGSGKSSLLKLILAEEWKTSGEITVLNTQFGNGEIPKLRKRISVVGSFIAERFQPNIKAENLVYTGKFNSSMLYKPYTDQELDEARQLLRQMGAKSLIGRNYASLSQGEKQVLLIARSLILKPELLILDEATNGLDLFAKEKLLKQLQQINQLKTAPTLIYISHHPDEITDIFTHLLLLREGKVIQSGKKENLLNEKILTDFYQEKVEVHRFEQKYFVIPAN.

An ABC transporter domain is found at 4–243; sequence INLKNINLTR…KILTDFYQEK (240 aa). 36-43 is a binding site for ATP; sequence GLNGSGKS.

Belongs to the ABC transporter superfamily.

This is an uncharacterized protein from Lactococcus lactis subsp. lactis (strain IL1403) (Streptococcus lactis).